A 332-amino-acid chain; its full sequence is Ephrin-B2a (332 aa).

Residues 1–24 form the signal peptide; that stretch reads MGDSLWRYYFGVLVIACKVNLSRA. Residues Asn20 and Asn33 are each glycosylated (N-linked (GlcNAc...) asparagine). An Ephrin RBD domain is found at 25–161; the sequence is LILDSIYWNT…TKSMKIIMKV (137 aa). Topologically, residues 25–225 are extracellular; the sequence is LILDSIYWNT…VIGSEVALFA (201 aa). 2 disulfides stabilise this stretch: Cys59/Cys98 and Cys86/Cys150. Residue Asn136 is glycosylated (N-linked (GlcNAc...) asparagine). The disordered stretch occupies residues 162-212; it reads GQNPSDPISPKDYPTSYPPKHPDLGGKDSKSNEVLKPDASPHGEDKGDGNK. The span at 181–210 shows a compositional bias: basic and acidic residues; that stretch reads KHPDLGGKDSKSNEVLKPDASPHGEDKGDG. Asn211 carries an N-linked (GlcNAc...) asparagine glycan. The helical transmembrane segment at 226 to 246 threads the bilayer; it reads CIASASVIVIIIIIMLVFLLL. At 247–332 the chain is on the cytoplasmic side; the sequence is KYRRRHRKHS…QSPANIYYKV (86 aa). The interval 255-285 is disordered; that stretch reads HSPQHATTLSLSTLATPKRGGSGGNNNGSEP. Low complexity predominate over residues 260-270; that stretch reads ATTLSLSTLAT. Positions 330-332 match the PDZ-binding motif; it reads YKV.

Belongs to the ephrin family. In terms of assembly, binds to the receptor tyrosine kinase ephb4. Post-translationally, inducible phosphorylation of tyrosine residues in the cytoplasmic domain.

It is found in the cell membrane. Cell surface transmembrane ligand for Eph receptors, a family of receptor tyrosine kinases which are crucial for migration, repulsion and adhesion during neuronal, vascular and epithelial development. Binds promiscuously Eph receptors residing on adjacent cells, leading to contact-dependent bidirectional signaling into neighboring cells. The signaling pathway downstream of the receptor is referred to as forward signaling while the signaling pathway downstream of the ephrin ligand is referred to as reverse signaling. Together with ephb4 may play a central role in heart morphogenesis and angiogenesis through regulation of cell adhesion and cell migration. The sequence is that of Ephrin-B2a (efnb2a) from Danio rerio (Zebrafish).